The primary structure comprises 500 residues: E3 ubiquitin-protein ligase TRIM4 (500 aa).

Residues Cys-12–Arg-53 form an RING-type zinc finger. A B box-type zinc finger spans residues Val-82–Ile-123. 4 residues coordinate Zn(2+): Cys-87, His-90, Cys-109, and His-115. A coiled-coil region spans residues Glu-212–Val-253. Positions Lys-288–Lys-500 constitute a B30.2/SPRY domain.

This sequence belongs to the TRIM/RBCC family. As to quaternary structure, homotrimer.

It localises to the cytoplasm. The catalysed reaction is S-ubiquitinyl-[E2 ubiquitin-conjugating enzyme]-L-cysteine + [acceptor protein]-L-lysine = [E2 ubiquitin-conjugating enzyme]-L-cysteine + N(6)-ubiquitinyl-[acceptor protein]-L-lysine.. It functions in the pathway protein modification; protein ubiquitination. E3 ubiquitin-protein ligase. Mediates 'Lys-63'-linked polyubiquitination of the innate immune receptor RIGI, this linkage doesn't lead to proteasomal degradation but seems to enhance IFN induction. This is E3 ubiquitin-protein ligase TRIM4 (TRIM4) from Homo sapiens (Human).